The sequence spans 339 residues: Anthranilate phosphoribosyltransferase (339 aa).

5-phospho-alpha-D-ribose 1-diphosphate contacts are provided by residues Gly-82, 85 to 86 (GD), Thr-90, 92 to 95 (NIST), 110 to 118 (KHGNRSASG), and Ser-122. An anthranilate-binding site is contributed by Gly-82. A Mg(2+)-binding site is contributed by Ser-94. Asn-113 serves as a coordination point for anthranilate. Residue Arg-168 participates in anthranilate binding. Positions 226 and 227 each coordinate Mg(2+).

This sequence belongs to the anthranilate phosphoribosyltransferase family. As to quaternary structure, homodimer. Requires Mg(2+) as cofactor.

The catalysed reaction is N-(5-phospho-beta-D-ribosyl)anthranilate + diphosphate = 5-phospho-alpha-D-ribose 1-diphosphate + anthranilate. It participates in amino-acid biosynthesis; L-tryptophan biosynthesis; L-tryptophan from chorismate: step 2/5. In terms of biological role, catalyzes the transfer of the phosphoribosyl group of 5-phosphorylribose-1-pyrophosphate (PRPP) to anthranilate to yield N-(5'-phosphoribosyl)-anthranilate (PRA). This chain is Anthranilate phosphoribosyltransferase, found in Methanosphaerula palustris (strain ATCC BAA-1556 / DSM 19958 / E1-9c).